We begin with the raw amino-acid sequence, 495 residues long: Probable biotin-dependent acyl-coenzyme A carboxylase beta3 subunit (495 aa).

Positions 1–236 (MSRITTDQLR…PLPAPQTPAP (236 aa)) constitute a CoA carboxyltransferase N-terminal domain. The 229-residue stretch at 242-470 (TWDSVVASRR…SNAIAAEVHA (229 aa)) folds into the CoA carboxyltransferase C-terminal domain.

This sequence belongs to the AccD/PCCB family. In terms of assembly, the biotin-dependent acyl-CoA carboxylase complex is composed of an AccA protein, which contains the biotin carboxylase (BC) and biotin carboxyl carrier protein (BCCP) domains, and an AccD protein, which contains the carboxyl transferase (CT) domain.

Functionally, component of a biotin-dependent acyl-CoA carboxylase complex. This subunit transfers the CO2 from carboxybiotin to the CoA ester substrate. The protein is Probable biotin-dependent acyl-coenzyme A carboxylase beta3 subunit (accD3) of Mycobacterium bovis (strain ATCC BAA-935 / AF2122/97).